The following is a 461-amino-acid chain: Bifunctional protein GlmU (461 aa).

The segment at 1–232 is pyrophosphorylase; the sequence is MNLQIIILAA…SFEVQGINNR (232 aa). UDP-N-acetyl-alpha-D-glucosamine contacts are provided by residues 8–11, K22, Q73, and 78–79; these read LAAG and GT. Residue D102 coordinates Mg(2+). 3 residues coordinate UDP-N-acetyl-alpha-D-glucosamine: G142, E157, and N230. N230 is a Mg(2+) binding site. The tract at residues 233-253 is linker; sequence QQLQQLERIWQQRAANQLMEK. The N-acetyltransferase stretch occupies residues 254 to 461; that stretch reads GVTLADANRF…WKRPAKRERD (208 aa). The UDP-N-acetyl-alpha-D-glucosamine site is built by R336 and K354. H366 functions as the Proton acceptor in the catalytic mechanism. The UDP-N-acetyl-alpha-D-glucosamine site is built by Y369 and N380. Acetyl-CoA-binding positions include A383, 389-390, S408, and A426; that span reads NY.

It in the N-terminal section; belongs to the N-acetylglucosamine-1-phosphate uridyltransferase family. In the C-terminal section; belongs to the transferase hexapeptide repeat family. In terms of assembly, homotrimer. It depends on Mg(2+) as a cofactor.

It localises to the cytoplasm. The catalysed reaction is alpha-D-glucosamine 1-phosphate + acetyl-CoA = N-acetyl-alpha-D-glucosamine 1-phosphate + CoA + H(+). The enzyme catalyses N-acetyl-alpha-D-glucosamine 1-phosphate + UTP + H(+) = UDP-N-acetyl-alpha-D-glucosamine + diphosphate. It functions in the pathway nucleotide-sugar biosynthesis; UDP-N-acetyl-alpha-D-glucosamine biosynthesis; N-acetyl-alpha-D-glucosamine 1-phosphate from alpha-D-glucosamine 6-phosphate (route II): step 2/2. It participates in nucleotide-sugar biosynthesis; UDP-N-acetyl-alpha-D-glucosamine biosynthesis; UDP-N-acetyl-alpha-D-glucosamine from N-acetyl-alpha-D-glucosamine 1-phosphate: step 1/1. Its pathway is bacterial outer membrane biogenesis; LPS lipid A biosynthesis. Functionally, catalyzes the last two sequential reactions in the de novo biosynthetic pathway for UDP-N-acetylglucosamine (UDP-GlcNAc). The C-terminal domain catalyzes the transfer of acetyl group from acetyl coenzyme A to glucosamine-1-phosphate (GlcN-1-P) to produce N-acetylglucosamine-1-phosphate (GlcNAc-1-P), which is converted into UDP-GlcNAc by the transfer of uridine 5-monophosphate (from uridine 5-triphosphate), a reaction catalyzed by the N-terminal domain. The sequence is that of Bifunctional protein GlmU from Legionella pneumophila (strain Lens).